The sequence spans 42 residues: Hemoglobin subunit beta-A (42 aa).

The Globin domain maps to 2-42 (EWTDAERSAILSLWGKIDTDELGPALLARLXLVXXXTQRYF).

Belongs to the globin family. As to quaternary structure, heterotetramer of two alpha chains and two beta chains. Red blood cells.

Functionally, involved in oxygen transport from gills to the various peripheral tissues. The polypeptide is Hemoglobin subunit beta-A (Catostomus clarkii (Desert sucker)).